Reading from the N-terminus, the 757-residue chain is Polyribonucleotide nucleotidyltransferase (757 aa).

Residues Asp-488 and Asp-494 each coordinate Mg(2+). Positions 555-614 (PKLYTMKINAEKIRDVIGKGGAVIRALTEETGCQINIEEDGTITIAATDAAKADIAKRRI) constitute a KH domain. The S1 motif domain occupies 624–692 (GKIYEGPVTK…ERGRVKLSMK (69 aa)). The segment at 693-757 (VLAERPAPGS…ADTGSGQRVG (65 aa)) is disordered. Residues 720 to 736 (ALAEREPRREMRDHGHP) show a composition bias toward basic and acidic residues. Positions 737–747 (PSEQQQQQSPP) are enriched in low complexity.

This sequence belongs to the polyribonucleotide nucleotidyltransferase family. Requires Mg(2+) as cofactor.

The protein resides in the cytoplasm. The enzyme catalyses RNA(n+1) + phosphate = RNA(n) + a ribonucleoside 5'-diphosphate. Involved in mRNA degradation. Catalyzes the phosphorolysis of single-stranded polyribonucleotides processively in the 3'- to 5'-direction. The protein is Polyribonucleotide nucleotidyltransferase of Verminephrobacter eiseniae (strain EF01-2).